The sequence spans 297 residues: Formylmethanofuran--tetrahydromethanopterin formyltransferase (297 aa).

Belongs to the FTR family. In terms of assembly, homotetramer.

Its subcellular location is the cytoplasm. It carries out the reaction N-formylmethanofuran + 5,6,7,8-tetrahydromethanopterin + H(+) = N(5)-formyl-5,6,7,8-tetrahydromethanopterin + methanofuran. The protein operates within one-carbon metabolism; methanogenesis from CO(2); 5,10-methenyl-5,6,7,8-tetrahydromethanopterin from CO(2): step 2/3. In terms of biological role, catalyzes the reversible transfer of a formyl group from formylmethanofuran (formyl-MFR) to tetrahydromethanopterin (H(4)MPT) to produce 5-formyl tetrahydromethanopterin (5-formyl-H(4)MPT) and methanofuran (MFR). This is Formylmethanofuran--tetrahydromethanopterin formyltransferase from Methanosarcina mazei (strain ATCC BAA-159 / DSM 3647 / Goe1 / Go1 / JCM 11833 / OCM 88) (Methanosarcina frisia).